A 187-amino-acid polypeptide reads, in one-letter code: Lipid A acyltransferase PagP (187 aa).

The N-terminal stretch at 1–26 (MIVAKKYFLVLSFLFVQFALLPQAFS) is a signal peptide. Residues His59, Asp102, and Ser103 contribute to the active site.

Belongs to the lipid A palmitoyltransferase family. Homodimer.

Its subcellular location is the cell outer membrane. The enzyme catalyses a lipid A + a 1,2-diacyl-sn-glycero-3-phosphocholine = a hepta-acyl lipid A + a 2-acyl-sn-glycero-3-phosphocholine. It carries out the reaction a lipid IVA + a 1,2-diacyl-sn-glycero-3-phosphocholine = a lipid IVB + a 2-acyl-sn-glycero-3-phosphocholine. The catalysed reaction is a lipid IIA + a 1,2-diacyl-sn-glycero-3-phosphocholine = a lipid IIB + a 2-acyl-sn-glycero-3-phosphocholine. Transfers a fatty acid residue from the sn-1 position of a phospholipid to the N-linked hydroxyfatty acid chain on the proximal unit of lipid A or its precursors. This is Lipid A acyltransferase PagP from Citrobacter koseri (strain ATCC BAA-895 / CDC 4225-83 / SGSC4696).